A 216-amino-acid polypeptide reads, in one-letter code: Cytidylate kinase (216 aa).

11–19 (GPAGAGKGT) is an ATP binding site.

The protein belongs to the cytidylate kinase family. Type 1 subfamily.

The protein localises to the cytoplasm. It catalyses the reaction CMP + ATP = CDP + ADP. The enzyme catalyses dCMP + ATP = dCDP + ADP. The protein is Cytidylate kinase of Mesorhizobium japonicum (strain LMG 29417 / CECT 9101 / MAFF 303099) (Mesorhizobium loti (strain MAFF 303099)).